A 315-amino-acid polypeptide reads, in one-letter code: MPVKVCLIFAGGTGMNVATKLVDLGEAVHCFDTCDKNVVDVHRSVNVTLTKGTRGAGGNRKVILPLVRPQIPALMDTIPEADFYIVCYSLGGGSGSVLGPLITGQLADRKASFVSFVVGAMESTDNLGNDIDTMKTLEAIAVNKHLPIVVNYVPNTQGRSYESINDEIAEKIRKVVLLVNQNHGRLDVHDVANWVRFTDKHNYLIPQVCELHIETTRKDAENVPEAISQLSLYLDPSKEVAFGTPIYRKVGIMKVDDLDVTDDQIHFVINSVGVVEIMKTITDSKLEMTRQQSKFTQRNPIIDADDNVDEDGMVV.

GTP is bound by residues 12 to 13 (GT), 93 to 95 (GSG), and N165.

The protein belongs to the FtsZ family. PhuZ subfamily. As to quaternary structure, homomultimer. Polymerizes in a strictly GTP-dependent manner.

The protein resides in the host cytoplasm. The enzyme catalyses GTP + H2O = GDP + phosphate + H(+). With respect to regulation, the non-hydrolyzable GTP analog GMPCPP stabilizes filaments, which never disassemble. Functionally, a tubulin-like GTPase that forms filaments, which are required for positioning viral DNA and capsids in the middle of the host cell for optimal replication. The motor component of a partition system which pushes phage DNA (encased by protein gp105) to the center of the bacterial host cell. Also required for movement of phage capsids to the vicinity of the viral DNA and rotation of the encased viral DNA at midcell. Forms filaments during the lytic phase, which position phage DNA at the center of the bacterial host cell. Filaments have a three-stranded intertwined achitecture and form a spindle-like cytoskeleton within the infected cell. Has GTPase activity. Filaments grow at the plus end and depolymerize at the minus end, a process called treadmilling, and switch from growing in a polar manner to catastrophic depolymerization, i.e. they display dynamic instability, like tubulin. In infected host cells the filament ends close to the cell pole are relatively stable, while the other end near the phage DNA is highly dynamic. Both capsid movement and DNA rotation probably require treadmilling. This is Phage tubulin-like protein from Pseudomonas phage 201phi2-1 (Pseudomonas chlororaphis phage 201phi2-1).